Reading from the N-terminus, the 527-residue chain is Peptide chain release factor 3 (527 aa).

Residues aspartate 10–leucine 278 form the tr-type G domain. GTP-binding positions include serine 19–threonine 26, aspartate 87–histidine 91, and asparagine 141–aspartate 144.

Belongs to the TRAFAC class translation factor GTPase superfamily. Classic translation factor GTPase family. PrfC subfamily.

Its subcellular location is the cytoplasm. Its function is as follows. Increases the formation of ribosomal termination complexes and stimulates activities of RF-1 and RF-2. It binds guanine nucleotides and has strong preference for UGA stop codons. It may interact directly with the ribosome. The stimulation of RF-1 and RF-2 is significantly reduced by GTP and GDP, but not by GMP. In Geobacter metallireducens (strain ATCC 53774 / DSM 7210 / GS-15), this protein is Peptide chain release factor 3.